The primary structure comprises 450 residues: Molybdate-anion transporter (450 aa).

A run of 12 helical transmembrane segments spans residues 1–21, 43–63, 79–99, 128–148, 176–196, 198–218, 249–269, 278–298, 311–331, 344–364, 376–396, and 409–429; these read MLVT…GLEL, LDFY…APYL, ILYV…SSLV, FVLL…FSAF, FWNH…ACWM, LGPV…GALA, VLLL…FVFL, GAPL…GSSL, PMHL…MLTF, FIAF…MSFL, GVLN…LLVL, and FSIC…LFTV.

This sequence belongs to the major facilitator superfamily.

Its subcellular location is the cell membrane. Mediates high-affinity intracellular uptake of the rare oligo-element molybdenum. The chain is Molybdate-anion transporter (MFSD5) from Bos taurus (Bovine).